A 279-amino-acid chain; its full sequence is Eukaryotic translation initiation factor 3 subunit J (279 aa).

Disordered stretches follow at residues 1–74 and 229–279; these read MSWD…SQKS and ERQA…DDFM. Acidic residues predominate over residues 20 to 39; sequence WEDEDNDDPLLESWDIDEEE. A coiled-coil region spans residues 34–74; the sequence is DIDEEEVARKKKEEEAKKKAEKEALKQKQQEAKNKKLSQKS. Residues 40–67 show a composition bias toward basic and acidic residues; it reads VARKKKEEEAKKKAEKEALKQKQQEAKN. Residues 268–279 show a composition bias toward acidic residues; sequence DDFDDFDDDDFM.

It belongs to the eIF-3 subunit J family. Component of the eukaryotic translation initiation factor 3 (eIF-3) complex.

It is found in the cytoplasm. Functionally, component of the eukaryotic translation initiation factor 3 (eIF-3) complex, which is involved in protein synthesis of a specialized repertoire of mRNAs and, together with other initiation factors, stimulates binding of mRNA and methionyl-tRNAi to the 40S ribosome. The eIF-3 complex specifically targets and initiates translation of a subset of mRNAs involved in cell proliferation. The polypeptide is Eukaryotic translation initiation factor 3 subunit J (Meyerozyma guilliermondii (strain ATCC 6260 / CBS 566 / DSM 6381 / JCM 1539 / NBRC 10279 / NRRL Y-324) (Yeast)).